Consider the following 668-residue polypeptide: tRNA 5-methylaminomethyl-2-thiouridine biosynthesis bifunctional protein MnmC (668 aa).

A tRNA (mnm(5)s(2)U34)-methyltransferase region spans residues 1-245; the sequence is MKHYAIQPAN…KREMLCGVME (245 aa). The interval 270–668 is FAD-dependent cmnm(5)s(2)U34 oxidoreductase; it reads IGGGIASALL…LLKGKAVKAG (399 aa).

This sequence in the N-terminal section; belongs to the methyltransferase superfamily. tRNA (mnm(5)s(2)U34)-methyltransferase family. The protein in the C-terminal section; belongs to the DAO family. It depends on FAD as a cofactor.

It localises to the cytoplasm. The catalysed reaction is 5-aminomethyl-2-thiouridine(34) in tRNA + S-adenosyl-L-methionine = 5-methylaminomethyl-2-thiouridine(34) in tRNA + S-adenosyl-L-homocysteine + H(+). Its function is as follows. Catalyzes the last two steps in the biosynthesis of 5-methylaminomethyl-2-thiouridine (mnm(5)s(2)U) at the wobble position (U34) in tRNA. Catalyzes the FAD-dependent demodification of cmnm(5)s(2)U34 to nm(5)s(2)U34, followed by the transfer of a methyl group from S-adenosyl-L-methionine to nm(5)s(2)U34, to form mnm(5)s(2)U34. This chain is tRNA 5-methylaminomethyl-2-thiouridine biosynthesis bifunctional protein MnmC, found in Escherichia coli O139:H28 (strain E24377A / ETEC).